The following is a 417-amino-acid chain: Serine hydroxymethyltransferase (417 aa).

Residues Leu120 and 124-126 each bind (6S)-5,6,7,8-tetrahydrofolate; that span reads GHL. Lys229 is subject to N6-(pyridoxal phosphate)lysine. 354 to 356 is a binding site for (6S)-5,6,7,8-tetrahydrofolate; sequence SPF.

This sequence belongs to the SHMT family. As to quaternary structure, homodimer. It depends on pyridoxal 5'-phosphate as a cofactor.

The protein resides in the cytoplasm. The catalysed reaction is (6R)-5,10-methylene-5,6,7,8-tetrahydrofolate + glycine + H2O = (6S)-5,6,7,8-tetrahydrofolate + L-serine. It participates in one-carbon metabolism; tetrahydrofolate interconversion. Its pathway is amino-acid biosynthesis; glycine biosynthesis; glycine from L-serine: step 1/1. In terms of biological role, catalyzes the reversible interconversion of serine and glycine with tetrahydrofolate (THF) serving as the one-carbon carrier. This reaction serves as the major source of one-carbon groups required for the biosynthesis of purines, thymidylate, methionine, and other important biomolecules. Also exhibits THF-independent aldolase activity toward beta-hydroxyamino acids, producing glycine and aldehydes, via a retro-aldol mechanism. The chain is Serine hydroxymethyltransferase from Acinetobacter baylyi (strain ATCC 33305 / BD413 / ADP1).